The following is a 334-amino-acid chain: Fructose-1,6-bisphosphatase class 1 (334 aa).

4 residues coordinate Mg(2+): E92, D114, L116, and D117. Residues 117 to 120 (DGSS) and N209 each bind substrate. E281 contacts Mg(2+).

Belongs to the FBPase class 1 family. In terms of assembly, homotetramer. Requires Mg(2+) as cofactor.

Its subcellular location is the cytoplasm. It catalyses the reaction beta-D-fructose 1,6-bisphosphate + H2O = beta-D-fructose 6-phosphate + phosphate. Its pathway is carbohydrate biosynthesis; gluconeogenesis. The sequence is that of Fructose-1,6-bisphosphatase class 1 from Nitrosomonas eutropha (strain DSM 101675 / C91 / Nm57).